Consider the following 592-residue polypeptide: Craniofacial development protein 2 (592 aa).

Over residues 1–16 (MEEFDSKDISTSKDED) the composition is skewed to basic and acidic residues. 2 disordered regions span residues 1–225 (MEEF…KGQS) and 499–592 (VTNE…DCNN). The span at 25–42 (HEDDINELVKEDEVDGEE) shows a compositional bias: acidic residues. Composition is skewed to basic and acidic residues over residues 78 to 108 (SRESGGRIIEKEDAAAEQEKGAESEDARQEE) and 147 to 162 (KVEELEKPKKAEEVKL). A compositionally biased stretch (polar residues) spans 175-184 (LTQQGRLSGR). 4 stretches are compositionally biased toward basic and acidic residues: residues 185 to 207 (TSEDEPRRSEGVQHATGEERRAD), 508 to 523 (EEAKSVLKQNEKEKPE), 552 to 562 (SVFKQDEKDKP), and 580 to 592 (EKCDLEKKKDCNN). The segment at 499–578 (VTNEEDATNE…SVPSLPAGSG (80 aa)) is hydrophilic.

In terms of processing, phosphorylated by CK2 (casein kinase II) in vitro. In terms of tissue distribution, expressed in liver and lung with higher expression in brain.

Its subcellular location is the cytoplasm. The protein localises to the nucleus. The sequence is that of Craniofacial development protein 2 (CFDP2) from Bos taurus (Bovine).